Here is a 207-residue protein sequence, read N- to C-terminus: LysM and putative peptidoglycan-binding domain-containing protein 2 (207 aa).

Residues 61–105 (IEHRLSPSDTLQGIALKYGVTMEQIKRANKLFSTDCIFLRKSLNI) enclose the LysM domain. The tract at residues 186–207 (AQRLKEEDLRHDDSYATCSYQH) is disordered. Residues 188–199 (RLKEEDLRHDDS) are compositionally biased toward basic and acidic residues.

The chain is LysM and putative peptidoglycan-binding domain-containing protein 2 (lysmd2) from Xenopus tropicalis (Western clawed frog).